The sequence spans 184 residues: NADH-quinone oxidoreductase subunit B (184 aa).

4 residues coordinate [4Fe-4S] cluster: Cys-37, Cys-38, Cys-103, and Cys-132.

This sequence belongs to the complex I 20 kDa subunit family. In terms of assembly, NDH-1 is composed of 14 different subunits. Subunits NuoB, C, D, E, F, and G constitute the peripheral sector of the complex. [4Fe-4S] cluster serves as cofactor.

The protein localises to the cell membrane. The catalysed reaction is a quinone + NADH + 5 H(+)(in) = a quinol + NAD(+) + 4 H(+)(out). NDH-1 shuttles electrons from NADH, via FMN and iron-sulfur (Fe-S) centers, to quinones in the respiratory chain. The immediate electron acceptor for the enzyme in this species is believed to be a menaquinone. Couples the redox reaction to proton translocation (for every two electrons transferred, four hydrogen ions are translocated across the cytoplasmic membrane), and thus conserves the redox energy in a proton gradient. The protein is NADH-quinone oxidoreductase subunit B of Nocardioides sp. (strain ATCC BAA-499 / JS614).